We begin with the raw amino-acid sequence, 479 residues long: MVGKGNECAAARRRFSLRAAAASSSSSSFLPCLLLAAALSAGCCRAHAATARAPRSLLARFPTTKMTSELEKEAGRYVDDSSQAARTNNKITNLQVSFVGHGHDTPADGEGQFADAAYPAKWKPDQDPSTPSLVVAHHLPNGNAPFIDAAYPVKWSPRADGPPKQPATFPASPNGEKAEFTDSAYSVKWSPRSVAPPKAPGIFAQHSNGNKAQFTDAAYPVDWNPRSVAPPTPPAALSSLAHPAAGIHIQRGMLFLMKKLHPGAVLPEGTKLALPHGDHGVAAAAPRFIYKDKGDAVPFDLRAMDAILAMFGILPGSDKAAQVADTLRACSELTAAGGGGEEPRACCATSREAVLDFAASALGTSAPRAVTTLVHGREPRRYVVAADGVARIGGDAVVACHPMPYLYEVYYCHRPADAVALRVDLHAVADVGLGGATAVAVCHVNTTTWDSAYFELLKASRGDAICHYMPQGYVLWLAN.

The first 46 residues, 1-46 (MVGKGNECAAARRRFSLRAAAASSSSSSFLPCLLLAAALSAGCCRA), serve as a signal peptide directing secretion. Residues 158–177 (RADGPPKQPATFPASPNGEK) are disordered. The region spanning 254-479 (LFLMKKLHPG…PQGYVLWLAN (226 aa)) is the BURP domain. A glycan (N-linked (GlcNAc...) asparagine) is linked at Asn-445.

In terms of tissue distribution, expressed in stamen.

The polypeptide is BURP domain-containing protein 4 (BURP4) (Oryza sativa subsp. japonica (Rice)).